The sequence spans 227 residues: uncharacterized protein (227 aa).

2 helical membrane-spanning segments follow: residues 7-24 (FVYA…VTWA) and 135-157 (VVVI…LMCL).

This sequence belongs to the TMEM9 family.

It localises to the membrane. This is an uncharacterized protein from Drosophila melanogaster (Fruit fly).